A 69-amino-acid chain; its full sequence is MPQLDTSTWLLTITLMILALFCIYQSKMINQTMISIPPQDKKVIKPTTQLPWESKWTKIYLPHSSPLLS.

The helical transmembrane segment at 8 to 24 (TWLLTITLMILALFCIY) threads the bilayer. Lys-55 carries the post-translational modification N6-acetyllysine; alternate. Lys-55 carries the N6-succinyllysine; alternate modification. Position 58 is an N6-acetyllysine (Lys-58).

It belongs to the ATPase protein 8 family. Component of the ATP synthase complex composed at least of ATP5F1A/subunit alpha, ATP5F1B/subunit beta, ATP5MC1/subunit c (homooctomer), MT-ATP6/subunit a, MT-ATP8/subunit 8, ATP5ME/subunit e, ATP5MF/subunit f, ATP5MG/subunit g, ATP5MK/subunit k, ATP5MJ/subunit j, ATP5F1C/subunit gamma, ATP5F1D/subunit delta, ATP5F1E/subunit epsilon, ATP5PF/subunit F6, ATP5PB/subunit b, ATP5PD/subunit d, ATP5PO/subunit OSCP. ATP synthase complex consists of a soluble F(1) head domain (subunits alpha(3) and beta(3)) - the catalytic core - and a membrane F(0) domain - the membrane proton channel (subunits c, a, 8, e, f, g, k and j). These two domains are linked by a central stalk (subunits gamma, delta, and epsilon) rotating inside the F1 region and a stationary peripheral stalk (subunits F6, b, d, and OSCP). Interacts with PRICKLE3.

The protein resides in the mitochondrion membrane. Functionally, subunit 8, of the mitochondrial membrane ATP synthase complex (F(1)F(0) ATP synthase or Complex V) that produces ATP from ADP in the presence of a proton gradient across the membrane which is generated by electron transport complexes of the respiratory chain. ATP synthase complex consist of a soluble F(1) head domain - the catalytic core - and a membrane F(1) domain - the membrane proton channel. These two domains are linked by a central stalk rotating inside the F(1) region and a stationary peripheral stalk. During catalysis, ATP synthesis in the catalytic domain of F(1) is coupled via a rotary mechanism of the central stalk subunits to proton translocation. In vivo, can only synthesize ATP although its ATP hydrolase activity can be activated artificially in vitro. Part of the complex F(0) domain. In Osphranter robustus (Wallaroo), this protein is ATP synthase F(0) complex subunit 8.